The chain runs to 306 residues: Mitochondrial brown fat uncoupling protein 1 (306 aa).

The Mitochondrial intermembrane segment spans residues 1–10; it reads MVGTTTTDVP. The chain crosses the membrane as a helical span at residues 11–32; it reads PTMGVKIFSAGVAACLADVITF. Solcar repeat units lie at residues 11-102, 110-200, and 209-294; these read PTMG…VQEF, PSLG…MKGA, and DDVP…LKGE. Over 33-73 the chain is Mitochondrial matrix; sequence PLDTAKVRQQIQGEFPITSGIRYKGVLGTITTLAKTEGPLK. K56 serves as a coordination point for fatty acid 16:0. Residues 74-96 traverse the membrane as a helical segment; that stretch reads LYSGLPAGLQRQISFASLRIGLY. Over 97-115 the chain is Mitochondrial intermembrane; the sequence is DTVQEFFTSGEETPSLGSK. The helical transmembrane segment at 116–132 threads the bilayer; that stretch reads ISAGLTTGGVAVFIGQP. Residues 133-177 lie on the Mitochondrial matrix side of the membrane; the sequence is TEVVKVRLQAQSHLHGLKPRYTGTYNAYRIIATTESLTSLWKGTT. Residues 178–194 form a helical membrane-spanning segment; it reads PNLLRNVIINCTELVTY. Topologically, residues 195–211 are mitochondrial intermembrane; sequence DLMKGALVRNEILADDV. Residues 212–231 form a helical membrane-spanning segment; sequence PCHFVSALIAGFCTTLLSSP. At 232–265 the chain is on the mitochondrial matrix side; that stretch reads VDVVKTRFINSPPGQYASVPNCAMTMFTKEGPTA. C253 carries the cysteine sulfenic acid (-SOH) modification. Residues 266-288 form a helical membrane-spanning segment; sequence FFKGFVPSFLRLGSWNVIMFVCF. A fatty acid 16:0-binding site is contributed by K268. Topologically, residues 289-306 are mitochondrial intermembrane; it reads EKLKGELMRSRQTVDCAT.

The protein belongs to the mitochondrial carrier (TC 2.A.29) family. In terms of assembly, most probably functions as a monomer. Binds one purine nucleotide per monomer. However, has also been suggested to function as a homodimer or a homotetramer. Tightly associates with cardiolipin in the mitochondrion inner membrane; may stabilize and regulate its activity. May undergo sulfenylation upon cold exposure. May increase the sensitivity of UCP1 thermogenic function to the activation by noradrenaline probably through structural effects. In terms of processing, may undergo ubiquitin-mediated proteasomal degradation. As to expression, brown adipose tissue.

It is found in the mitochondrion inner membrane. It catalyses the reaction H(+)(in) = H(+)(out). With respect to regulation, has no constitutive proton transporter activity and has to be activated by long-chain fatty acids/LCFAs. Inhibited by purine nucleotides. Both purine nucleotides and LCFAs bind the cytosolic side of the transporter and directly compete to activate or inhibit it. Activated by noradrenaline and reactive oxygen species. Despite lacking canonical translational encoding for selenocysteine, a small pool of the protein has been observed to selectively incorporate selenocysteine at 'Cys-253'. Selenocysteine-modified protein is highly sensitive to redox modification and may constitute a pool of protein highly sensitive to activation by elevated levels of reactive oxygen species (ROS). In terms of biological role, mitochondrial protein responsible for thermogenic respiration, a specialized capacity of brown adipose tissue and beige fat that participates in non-shivering adaptive thermogenesis to temperature and diet variations and more generally to the regulation of energy balance. Functions as a long-chain fatty acid/LCFA and proton symporter, simultaneously transporting one LCFA and one proton through the inner mitochondrial membrane. However, LCFAs remaining associated with the transporter via their hydrophobic tails, it results in an apparent transport of protons activated by LCFAs. Thereby, dissipates the mitochondrial proton gradient and converts the energy of substrate oxydation into heat instead of ATP. Regulates the production of reactive oxygen species/ROS by mitochondria. This chain is Mitochondrial brown fat uncoupling protein 1, found in Oryctolagus cuniculus (Rabbit).